A 152-amino-acid polypeptide reads, in one-letter code: UPF0225 protein YchJ (152 aa).

It belongs to the UPF0225 family.

This is UPF0225 protein YchJ from Escherichia coli O6:K15:H31 (strain 536 / UPEC).